A 101-amino-acid chain; its full sequence is Small ribosomal subunit protein uS14 (101 aa).

Belongs to the universal ribosomal protein uS14 family. In terms of assembly, part of the 30S ribosomal subunit. Contacts proteins S3 and S10.

Its function is as follows. Binds 16S rRNA, required for the assembly of 30S particles and may also be responsible for determining the conformation of the 16S rRNA at the A site. The polypeptide is Small ribosomal subunit protein uS14 (Actinobacillus pleuropneumoniae serotype 3 (strain JL03)).